A 339-amino-acid polypeptide reads, in one-letter code: UDP-galactose transporter homolog 1 (339 aa).

Helical transmembrane passes span 5–25 (ILKH…WGLL), 43–63 (VPYI…LIYI), 91–111 (AISA…TYML), 138–158 (LVVL…HKPS), 171–191 (SSLI…LTNA), 208–228 (HLMF…MVLV), 246–268 (ISRY…FYTL), 273–295 (SLVL…IIVY), and 301–321 (LWQW…SMGK).

Belongs to the nucleotide-sugar transporter family. SLC35B subfamily.

It is found in the endoplasmic reticulum membrane. May be involved in specific transport of UDP-Gal from the cytosol to the Golgi lumen. Involved in the maintenance of optimal conditions for the folding of secretory pathway proteins in the endoplasmic reticulum. The polypeptide is UDP-galactose transporter homolog 1 (HUT1) (Kluyveromyces lactis (strain ATCC 8585 / CBS 2359 / DSM 70799 / NBRC 1267 / NRRL Y-1140 / WM37) (Yeast)).